Here is a 911-residue protein sequence, read N- to C-terminus: MGQELSQHERYVEQLKQALKTRGVKVKYADLLKFFDFVKDTCPWFPQEGTIDIKRWRRVGDCFQDYYNTFGPEKVPVTAFSYWNLIKELIDKKEVNPQVMAAVAQTEEILKSNSQTDLTKTSQNPDLDLISLDSDDEGAKSSSLQDKGLSSTKKPKRFPVLLTAQTSKDPEDPNPSEVDWDGLEDEAAKYHNPDWPPFLTRPPPYNKATPSAPTVMAVVNPKEELKEKIAQLEEQIKLEELHQALISKLQKLKTGNETVTHPDTAGGLSRTPHWPGQHIPKGKCCASREKEEQIPKDIFPVTETVDGQGQAWRHHNGFDFAVIKELKTAASQYGATAPYTLAIVESVADNWLTPTDWNTLVRAVLSGGDHLLWKSEFFENCRDTAKRNQQAGNGWDFDMLTGSGNYSSTDAQMQYDPGLFAQIQAAATKAWRKLPVKGDPGASLTGVKQGPDEPFADFVHRLITTAGRIFGSAEAGVDYVKQLAYENANPACQAAIRPYRKKTDLTGYIRLCSDIGPSYQQGLAMAAAFSGQTVKDFLNNKNKEKGGCCFKCGKKGHFAKNCHEHAHNNAEPKVPGLCPRCKRGKHWANECKSKTDNQGNPIPPHQGNRVEGPAPGPETSLWGSQLCSSQQKQPISKLTRATPGSAGLDLCSTSHTVLTPEMGPQALSTGIYGPLPPNTFGLILGRSSITMKGLQVYPGVIDNDYTGEIKIMAKAVNNIVTVSQGNRIAQLILLPLIETDNKVQQPYRGQGSFGSSDIYWVQPITCQKPSLTLWLDDKMFTGLIDTGADVTIIKLEDWPPNWPITDTLTNLRGIGQSNNPKQSSKYLTWRDKENNSGLIKPFVIPNLPVNLWGRDLLSQMKIMMCSPNDIVTAQMLAQGYSPGKGLGKKENGILHPIPNQGQSNKKGFGNF.

A propeptide spanning residues 101–161 is cleaved from the precursor; the sequence is AAVAQTEEIL…TKKPKRFPVL (61 aa). Polar residues-rich tracts occupy residues 113–125 and 140–152; these read NSQTDLTKTSQNP and KSSSLQDKGLSST. The tract at residues 113–178 is disordered; sequence NSQTDLTKTS…DPEDPNPSEV (66 aa). The PPXY motif signature appears at 202-205; sequence PPPY. A PTAP/PSAP motif motif is present at residues 210-213; sequence PSAP. Residues 216–257 adopt a coiled-coil conformation; it reads MAVVNPKEELKEKIAQLEEQIKLEELHQALISKLQKLKTGNE. The disordered stretch occupies residues 260–279; sequence THPDTAGGLSRTPHWPGQHI. 2 CCHC-type zinc fingers span residues 547–564 and 576–593; these read GCCFKCGKKGHFAKNCHE and GLCPRCKRGKHWANECKS. The disordered stretch occupies residues 592 to 626; sequence KSKTDNQGNPIPPHQGNRVEGPAPGPETSLWGSQL. The 77-residue stretch at 780 to 856 folds into the Peptidase A2 domain; sequence FTGLIDTGAD…LPVNLWGRDL (77 aa). Catalysis depends on aspartate 785, which acts as the Protease; shared with dimeric partner. Positions 867–911 constitute a G-patch domain; the sequence is PNDIVTAQMLAQGYSPGKGLGKKENGILHPIPNQGQSNKKGFGNF.

In terms of assembly, homodimer. Interacts with the reverse transcriptase/ribonuclease H. As to quaternary structure, homotrimer. Post-translationally, released by autocatalytic processing. The protease can undergo further autoprocessing to yield 2 shorter but enzymatically active forms of 12 kDa and 13 kDa without the GDP domain. the 12 kDa form is monomeric. In terms of processing, myristoylated. Myristoylation of the matrix (MA) domain mediates the transport and binding of Gag polyproteins to the host plasma membrane and is required for the assembly of viral particles. Specific enzymatic cleavages in vivo yield mature proteins.

It is found in the virion. It catalyses the reaction dUTP + H2O = dUMP + diphosphate + H(+). Its function is as follows. Matrix protein. Nucleocapsid protein p14: Nucleocapsid protein. In terms of biological role, capsid protein. Functionally, the aspartyl protease mediates proteolytic cleavages of Gag and Gag-Pol polyproteins during or shortly after the release of the virion from the plasma membrane. Cleavages take place as an ordered, step-wise cascade to yield mature proteins. This process is called maturation. Displays maximal activity during the budding process just prior to particle release from the cell. Its function is as follows. Enhances the activity of the reverse transcriptase. May be part of the mature RT. This Mason-Pfizer monkey virus (MPMV) protein is Gag-Pro polyprotein (gag-pro).